A 63-amino-acid polypeptide reads, in one-letter code: Large ribosomal subunit protein uL29 (63 aa).

The protein belongs to the universal ribosomal protein uL29 family.

The chain is Large ribosomal subunit protein uL29 from Hahella chejuensis (strain KCTC 2396).